We begin with the raw amino-acid sequence, 85 residues long: Large ribosomal subunit protein bL27 (85 aa).

The segment at 1–23 (MAHKKGQGSTQNNRDSAGRRLGV) is disordered.

This sequence belongs to the bacterial ribosomal protein bL27 family.

This Aliarcobacter butzleri (strain RM4018) (Arcobacter butzleri) protein is Large ribosomal subunit protein bL27.